The chain runs to 477 residues: Bifunctional protein HldE (477 aa).

The tract at residues 1 to 318 is ribokinase; sequence MKVNLPAFER…ENAVRGRADT (318 aa). Residue 195-198 participates in ATP binding; it reads NLSE. D264 is an active-site residue. The interval 344 to 477 is cytidylyltransferase; it reads MTNGVFDILH…IKKIQTESEK (134 aa).

It in the N-terminal section; belongs to the carbohydrate kinase PfkB family. This sequence in the C-terminal section; belongs to the cytidylyltransferase family. In terms of assembly, homodimer.

The catalysed reaction is D-glycero-beta-D-manno-heptose 7-phosphate + ATP = D-glycero-beta-D-manno-heptose 1,7-bisphosphate + ADP + H(+). It catalyses the reaction D-glycero-beta-D-manno-heptose 1-phosphate + ATP + H(+) = ADP-D-glycero-beta-D-manno-heptose + diphosphate. It participates in nucleotide-sugar biosynthesis; ADP-L-glycero-beta-D-manno-heptose biosynthesis; ADP-L-glycero-beta-D-manno-heptose from D-glycero-beta-D-manno-heptose 7-phosphate: step 1/4. It functions in the pathway nucleotide-sugar biosynthesis; ADP-L-glycero-beta-D-manno-heptose biosynthesis; ADP-L-glycero-beta-D-manno-heptose from D-glycero-beta-D-manno-heptose 7-phosphate: step 3/4. Its function is as follows. Catalyzes the phosphorylation of D-glycero-D-manno-heptose 7-phosphate at the C-1 position to selectively form D-glycero-beta-D-manno-heptose-1,7-bisphosphate. Functionally, catalyzes the ADP transfer from ATP to D-glycero-beta-D-manno-heptose 1-phosphate, yielding ADP-D-glycero-beta-D-manno-heptose. The protein is Bifunctional protein HldE of Salmonella dublin (strain CT_02021853).